The primary structure comprises 107 residues: Large ribosomal subunit protein uL24 (107 aa).

The protein belongs to the universal ribosomal protein uL24 family. As to quaternary structure, part of the 50S ribosomal subunit.

Functionally, one of two assembly initiator proteins, it binds directly to the 5'-end of the 23S rRNA, where it nucleates assembly of the 50S subunit. In terms of biological role, one of the proteins that surrounds the polypeptide exit tunnel on the outside of the subunit. The protein is Large ribosomal subunit protein uL24 of Nitratidesulfovibrio vulgaris (strain ATCC 29579 / DSM 644 / CCUG 34227 / NCIMB 8303 / VKM B-1760 / Hildenborough) (Desulfovibrio vulgaris).